A 195-amino-acid chain; its full sequence is 3-isopropylmalate dehydratase small subunit (195 aa).

It belongs to the LeuD family. LeuD type 1 subfamily. In terms of assembly, heterodimer of LeuC and LeuD.

The enzyme catalyses (2R,3S)-3-isopropylmalate = (2S)-2-isopropylmalate. The protein operates within amino-acid biosynthesis; L-leucine biosynthesis; L-leucine from 3-methyl-2-oxobutanoate: step 2/4. Its function is as follows. Catalyzes the isomerization between 2-isopropylmalate and 3-isopropylmalate, via the formation of 2-isopropylmaleate. This chain is 3-isopropylmalate dehydratase small subunit, found in Rubrobacter xylanophilus (strain DSM 9941 / JCM 11954 / NBRC 16129 / PRD-1).